A 243-amino-acid chain; its full sequence is Secreted RxLR effector protein 28 (243 aa).

Positions 1–26 (MHVSRIIAHIALATAITATTVSPTDA) are cleaved as a signal peptide. The short motif at 49–52 (RGLR) is the RxLR element. Residues 187 to 243 (NVDEDKGQNFGHSVSGPPTTTLTGPHTKSGIPPFENLVAPAKGSMPNTRRNGYQFFE) form a disordered region. Low complexity predominate over residues 199–216 (SVSGPPTTTLTGPHTKSG).

It belongs to the RxLR effector family.

It is found in the secreted. Its subcellular location is the host cytoplasm. It localises to the host nucleus. In terms of biological role, effector that significantly enhances susceptibilities of grapevine and tobacco to pathogens. Acts as a broad suppressor of cell death to interrupt plant immunity. Completely inhibits cell death induced by cell death-inducing proteins, including the PAMP elicitor INF1 from P.infestans. Reduces the transcriptional levels of the defense-related genes and impairs the H(2)O(2) accumulation in N.benthamiana. The protein is Secreted RxLR effector protein 28 of Plasmopara viticola (Downy mildew of grapevine).